A 260-amino-acid chain; its full sequence is Proteasome subunit alpha (260 aa).

Residues 231–260 (LLPEDFSPGQTEGGGDPAPESGDSKDAKDN) form a disordered region.

Belongs to the peptidase T1A family. The 20S proteasome core is composed of 14 alpha and 14 beta subunits that assemble into four stacked heptameric rings, resulting in a barrel-shaped structure. The two inner rings, each composed of seven catalytic beta subunits, are sandwiched by two outer rings, each composed of seven alpha subunits. The catalytic chamber with the active sites is on the inside of the barrel. Has a gated structure, the ends of the cylinder being occluded by the N-termini of the alpha-subunits. Is capped by the proteasome-associated ATPase, ARC.

It localises to the cytoplasm. It participates in protein degradation; proteasomal Pup-dependent pathway. The formation of the proteasomal ATPase ARC-20S proteasome complex, likely via the docking of the C-termini of ARC into the intersubunit pockets in the alpha-rings, may trigger opening of the gate for substrate entry. Interconversion between the open-gate and close-gate conformations leads to a dynamic regulation of the 20S proteasome proteolysis activity. In terms of biological role, component of the proteasome core, a large protease complex with broad specificity involved in protein degradation. The protein is Proteasome subunit alpha of Mycobacteroides abscessus (strain ATCC 19977 / DSM 44196 / CCUG 20993 / CIP 104536 / JCM 13569 / NCTC 13031 / TMC 1543 / L948) (Mycobacterium abscessus).